A 223-amino-acid chain; its full sequence is Large ribosomal subunit protein bL21 (223 aa).

Residues 110 to 149 form a disordered region; it reads TALKSTTAEPKAADAPKAKAKAAPKAEKAAAPKAEKAPAK. The span at 133 to 147 shows a compositional bias: basic and acidic residues; it reads PKAEKAAAPKAEKAP.

It belongs to the bacterial ribosomal protein bL21 family. Part of the 50S ribosomal subunit. Contacts protein L20.

This protein binds to 23S rRNA in the presence of protein L20. This Maricaulis maris (strain MCS10) (Caulobacter maris) protein is Large ribosomal subunit protein bL21.